Reading from the N-terminus, the 346-residue chain is 26S proteasome non-ATPase regulatory subunit 4 (346 aa).

Residues 5-190 enclose the VWFA domain; it reads STMICVDNSE…LTDALLQSSV (186 aa). UIM domains follow at residues 216-235 and 273-292; these read ENDP…ERAR and TEEQ…NAPA. A disordered region spans residues 290-346; that stretch reads APAEQPQVQHEQMDVDGAPAVGGDNLDDLMNNPELLQQIVDDLPAANAEKDDDKEKK. Positions 337-346 are enriched in basic and acidic residues; that stretch reads AEKDDDKEKK.

It belongs to the proteasome subunit S5A family. As to quaternary structure, the 26S proteasome is composed of a core protease, known as the 20S proteasome, capped at one or both ends by the 19S regulatory complex (RC). The RC is composed of at least 18 different subunits in two subcomplexes, the base and the lid, which form the portions proximal and distal to the 20S proteolytic core, respectively. In terms of tissue distribution, broadly expressed with high expression in the pharynx, intestine, hypodermis and spermatheca and weak expression in the excretory cell, body wall muscle, vulva and somatic gonad.

It localises to the cytoplasm. It is found in the nucleus. Binds and presumably selects ubiquitin-conjugates for destruction. Required for protein degradation and ubiquitin-proteasome system (UBS) function and regulates proteasomal subunit expression. Involvement in UBS might be cell type specific. Regulator of the autophagy-lysosome pathway that may confer resistance to autophagy by regulating the expression of autophagy-related proteins such as lgg-1, and by regulating lysosome formation, possibly by modulating elt-2 activity. Required for fertility, sperm production, and sex determination through regulation of tra-2 protein. Plays a role in the elimination of paternal mitochondria in fertilized eggs. The protein is 26S proteasome non-ATPase regulatory subunit 4 of Caenorhabditis elegans.